The primary structure comprises 369 residues: DNA replication and repair protein RecF (369 aa).

30 to 37 (GQNAQGKT) is a binding site for ATP.

Belongs to the RecF family.

Its subcellular location is the cytoplasm. The RecF protein is involved in DNA metabolism; it is required for DNA replication and normal SOS inducibility. RecF binds preferentially to single-stranded, linear DNA. It also seems to bind ATP. This is DNA replication and repair protein RecF from Acetivibrio thermocellus (strain ATCC 27405 / DSM 1237 / JCM 9322 / NBRC 103400 / NCIMB 10682 / NRRL B-4536 / VPI 7372) (Clostridium thermocellum).